Consider the following 1190-residue polypeptide: Phosphatidylinositol 3,4,5-trisphosphate 5-phosphatase 1 (1190 aa).

Residues 8 to 104 (WNHGNITRSK…GLVTHLQFPV (97 aa)) enclose the SH2 domain. The span at 111 to 120 (AIDEPEEDTE) shows a compositional bias: acidic residues. The interval 111–130 (AIDEPEEDTESVMSPPELPP) is disordered. An SH3-binding 1 motif is present at residues 126–131 (PELPPR). S245 carries the phosphoserine modification. The short motif at 914-917 (NPNY) is the NPXY motif 1 element. Y917 bears the Phosphotyrosine mark. Residue S934 is modified to Phosphoserine. At Y944 the chain carries Phosphotyrosine. Residues 946–1190 (QLPKDSSLGP…ESLLGRTAMQ (245 aa)) are disordered. Residues 961–971 (PPTPPSQPPLS) are compositionally biased toward pro residues. Phosphothreonine is present on T963. A phosphoserine mark is found at S966 and S971. An SH3-binding 2 motif is present at residues 969-974 (PLSPKK). The span at 989 to 998 (QETRPGDLGK) shows a compositional bias: basic and acidic residues. The interaction with DAB2 stretch occupies residues 1014 to 1028 (MFENPLYGSVSPFPK). The NPXY motif 2 signature appears at 1017–1020 (NPLY). Position 1020 is a phosphotyrosine (Y1020). The segment covering 1031-1045 (PRKEQESPKMMRKEP) has biased composition (basic and acidic residues). Positions 1038–1049 (PKMMRKEPPPCP) match the SH3-binding 3 motif. Residues 1140-1149 (IPAPRPPLPV) show a composition bias toward pro residues. The span at 1161–1183 (KGRDYRDNTELPHHGKHRQEESL) shows a compositional bias: basic and acidic residues.

The protein belongs to the inositol 1,4,5-trisphosphate 5-phosphatase family. Interacts with tyrosine phosphorylated forms of SHC1. Interacts with tyrosine phosphorylated form of DOK1. Interacts with tyrosine phosphorylated form of DOK3. Interacts with tyrosine phosphorylated form of SLAMF1/CD150. Interacts with PTPN11/SHP-2 in response to IL-3. Interacts with receptor EPOR. Interacts with receptors MS4A2/FCER1B and FCER1G. Interacts with receptors FCGR2B and FCGR3. Interacts with receptor FCGR2A, leading to regulate gene expression during the phagocytic process. Interacts with GRB2. Interacts with PLCG1. Interacts with tyrosine kinases SRC and TEC. Interacts with c-Met/MET. Interacts with MILR1 (tyrosine-phosphorylated). Can weakly interact (via NPXY motif 2) with DAB2 (via PID domain); the interaction is impaired by tyrosine phosphorylation of the NPXY motif. Interacts (via SH2 domain) with tyrosine phosphorylated KLRC1 (via ITIM). Interacts with MPL/TPOR. Post-translationally, tyrosine phosphorylated by the members of the SRC family after exposure to a diverse array of extracellular stimuli such as cytokines, growth factors, antibodies, chemokines, integrin ligands and hypertonic and oxidative stress. Phosphorylated upon IgG receptor FCGR2B-binding.

Its subcellular location is the cytoplasm. It is found in the cell membrane. The protein localises to the membrane raft. It localises to the cytoskeleton. The enzyme catalyses a 1,2-diacyl-sn-glycero-3-phospho-(1D-myo-inositol-3,4,5-trisphosphate) + H2O = a 1,2-diacyl-sn-glycero-3-phospho-(1D-myo-inositol-3,4-bisphosphate) + phosphate. It carries out the reaction 1D-myo-inositol 1,3,4,5-tetrakisphosphate + H2O = 1D-myo-inositol 1,3,4-trisphosphate + phosphate. The catalysed reaction is a 1,2-diacyl-sn-glycero-3-phospho-(1D-myo-inositol-4,5-bisphosphate) + H2O = a 1,2-diacyl-sn-glycero-3-phospho-(1D-myo-inositol 4-phosphate) + phosphate. With respect to regulation, activated upon translocation to the sites of synthesis of PtdIns(3,4,5)P3 in the membrane. Phosphatidylinositol (PtdIns) phosphatase that specifically hydrolyzes the 5-phosphate of phosphatidylinositol-3,4,5-trisphosphate (PtdIns(3,4,5)P3) to produce PtdIns(3,4)P2, thereby negatively regulating the PI3K (phosphoinositide 3-kinase) pathways. Also able to hydrolyze the 5-phosphate of phosphatidylinositol-4,5-bisphosphate (PtdIns(4,5)P3) and inositol 1,3,4,5-tetrakisphosphate. Acts as a negative regulator of B-cell antigen receptor signaling. Mediates signaling from the FC-gamma-RIIB receptor (FCGR2B), playing a central role in terminating signal transduction from activating immune/hematopoietic cell receptor systems. Acts as a negative regulator of myeloid cell proliferation/survival and chemotaxis, mast cell degranulation, immune cells homeostasis, integrin alpha-IIb/beta-3 signaling in platelets and JNK signaling in B-cells. Regulates proliferation of osteoclast precursors, macrophage programming, phagocytosis and activation and is required for endotoxin tolerance. Involved in the control of cell-cell junctions, CD32a signaling in neutrophils and modulation of EGF-induced phospholipase C activity. Key regulator of neutrophil migration, by governing the formation of the leading edge and polarization required for chemotaxis. Modulates FCGR3/CD16-mediated cytotoxicity in NK cells. Mediates the activin/TGF-beta-induced apoptosis through its Smad-dependent expression. In Rattus norvegicus (Rat), this protein is Phosphatidylinositol 3,4,5-trisphosphate 5-phosphatase 1 (Inpp5d).